Here is a 531-residue protein sequence, read N- to C-terminus: Apolipoprotein N-acyltransferase (531 aa).

A run of 7 helical transmembrane segments spans residues 8 to 28 (IILLSGASRAFVGFLAGLLAM), 34 to 54 (FGIFAAAFISFPMLVWLIDGV), 74 to 94 (WSFGFGYFLGGLWWLGNAFLV), 105 to 125 (LAVVGLPAVLALFYALAVLVA), 128 to 148 (LWSDGVGRIAALAVGFGVAEW), 178 to 198 (VLNVATINMLAVFVFAAPALI), and 206 to 226 (VGLAVAAALFAAHIGYGYYRL). The 251-residue stretch at 243 to 493 (VQPVIDQAKK…KGVTDAILPG (251 aa)) folds into the CN hydrolase domain. Catalysis depends on E287, which acts as the Proton acceptor. K351 is a catalytic residue. C405 functions as the Nucleophile in the catalytic mechanism. A helical transmembrane segment spans residues 501–521 (SMLRGRIFWFTGVFLLLVAAI).

The protein belongs to the CN hydrolase family. Apolipoprotein N-acyltransferase subfamily.

The protein resides in the cell inner membrane. The enzyme catalyses N-terminal S-1,2-diacyl-sn-glyceryl-L-cysteinyl-[lipoprotein] + a glycerophospholipid = N-acyl-S-1,2-diacyl-sn-glyceryl-L-cysteinyl-[lipoprotein] + a 2-acyl-sn-glycero-3-phospholipid + H(+). Its pathway is protein modification; lipoprotein biosynthesis (N-acyl transfer). In terms of biological role, catalyzes the phospholipid dependent N-acylation of the N-terminal cysteine of apolipoprotein, the last step in lipoprotein maturation. The protein is Apolipoprotein N-acyltransferase of Sinorhizobium fredii (strain NBRC 101917 / NGR234).